The sequence spans 136 residues: ATP synthase epsilon chain (136 aa).

This sequence belongs to the ATPase epsilon chain family. As to quaternary structure, F-type ATPases have 2 components, CF(1) - the catalytic core - and CF(0) - the membrane proton channel. CF(1) has five subunits: alpha(3), beta(3), gamma(1), delta(1), epsilon(1). CF(0) has three main subunits: a, b and c.

It localises to the cell membrane. In terms of biological role, produces ATP from ADP in the presence of a proton gradient across the membrane. This is ATP synthase epsilon chain from Exiguobacterium sp. (strain ATCC BAA-1283 / AT1b).